The following is a 701-amino-acid chain: MPRKTPIERYRNIGISAHIDAGKTTTTERILFYTGVTHKIGEVHDGAATMDWMEQEQERGITITSAATTAFWKGMAGNYPEHRINIIDTPGHVDFTIEVERSMRVLDGACMVYDSVGGVQPQSETVWRQANKYKVPRIAFVNKMDRVGADFFRVQRQIGDRLKGVAVPIQIPVGAEEHFQGVVDLVKMKAIFWDEENQGIKFEYRDIPPELAATAKEWHDKMVEAAAEANEELLDKYLGGETLTEEEIKHGIRVRTIANEIVPMLCGSAFKNKGVQAMLDAVIDYLPSPLDVPAITGHDEHDNEIERHPNDNDPFSALAFKIMTDPFVGQLIFFRVYSGVVNSGDTVYNAIKEKKERLGRILQMHANERKEIKEVYAGDIAAAVGLKEATTGDTLCDPNHVIILEKMIFPEPVISQAVEPKTKVDQEKMGIALNRLAQEDPSFRVQTDEESGQTIISGMGELHLEILVDRMKREFGVEATVGKPQVAYRETVRNKVEDVEGKFVKQSGGRGQYGHAVITLEPAPQGKGYEFVDAIKGGVIPREYIPAVDKGIQETLKAGVLAGYPVVDVKVTLTFGSYHDVDSNENAFRMAGSMAFKEAMRKARPVLLEPMMAVEVETPEDFMGNVMGDLSSRRGLVQGMEDIAGGGGKLVRAEVPLAEMFGYSTSLRSATQGRATYTMEFKHYAETPNNVAEAVINAKHK.

The tr-type G domain occupies 8-290; it reads ERYRNIGISA…AVIDYLPSPL (283 aa). GTP contacts are provided by residues 17–24, 88–92, and 142–145; these read AHIDAGKT, DTPGH, and NKMD.

The protein belongs to the TRAFAC class translation factor GTPase superfamily. Classic translation factor GTPase family. EF-G/EF-2 subfamily.

Its subcellular location is the cytoplasm. Catalyzes the GTP-dependent ribosomal translocation step during translation elongation. During this step, the ribosome changes from the pre-translocational (PRE) to the post-translocational (POST) state as the newly formed A-site-bound peptidyl-tRNA and P-site-bound deacylated tRNA move to the P and E sites, respectively. Catalyzes the coordinated movement of the two tRNA molecules, the mRNA and conformational changes in the ribosome. This is Elongation factor G 1 from Paraburkholderia xenovorans (strain LB400).